Here is a 144-residue protein sequence, read N- to C-terminus: Large ribosomal subunit protein uL11 (144 aa).

Belongs to the universal ribosomal protein uL11 family. Part of the ribosomal stalk of the 50S ribosomal subunit. Interacts with L10 and the large rRNA to form the base of the stalk. L10 forms an elongated spine to which L12 dimers bind in a sequential fashion forming a multimeric L10(L12)X complex. Post-translationally, one or more lysine residues are methylated.

Its function is as follows. Forms part of the ribosomal stalk which helps the ribosome interact with GTP-bound translation factors. This chain is Large ribosomal subunit protein uL11, found in Streptomyces griseus subsp. griseus (strain JCM 4626 / CBS 651.72 / NBRC 13350 / KCC S-0626 / ISP 5235).